The sequence spans 347 residues: MRIEEDLKLGFKDVLFRPKRSTLSSRSQVELHREFRFRHTQTSWRGVPIIAANMDTVGTFAMAKALASFDVMTAIHKHYTEQEWQTFVQNSSDPLLQYCMVSTGTSNNDFLKLQRILALSPALRFICVDVANGYSEHFADFVKIVRETFPQHVICAGNVVTGEMVEELILSGADIVKVGIGPGSVCTTRVKTGVGYPQLSAIIECADAAHGLGGQIVGDGGCTCPGDVAKAFGGGADFVMLGGMLAAHEESGGNKFERDGKTFMRFYGMSSSTAMEQHAGGIAHYRASEGKTVELPFRGPVSATIQDILGGVRSTCTYVGAAKLKELTKRTTFIRVSEQENPVYGQE.

Position 108–131 (108–131) interacts with NADP(+); the sequence is NDFLKLQRILALSPALRFICVDVA. K(+) is bound by residues Gly181 and Gly183. Cys186 acts as the Thioimidate intermediate in catalysis. 216–239 lines the NADP(+) pocket; that stretch reads IVGDGGCTCPGDVAKAFGGGADFV.

This sequence belongs to the IMPDH/GMPR family. GuaC type 1 subfamily. In terms of assembly, homotetramer.

The enzyme catalyses IMP + NH4(+) + NADP(+) = GMP + NADPH + 2 H(+). In terms of biological role, catalyzes the irreversible NADPH-dependent deamination of GMP to IMP. It functions in the conversion of nucleobase, nucleoside and nucleotide derivatives of G to A nucleotides, and in maintaining the intracellular balance of A and G nucleotides. This is GMP reductase from Tolumonas auensis (strain DSM 9187 / NBRC 110442 / TA 4).